Here is a 494-residue protein sequence, read N- to C-terminus: Glycerol kinase (494 aa).

Thr-13 is an ADP binding site. Residues Thr-13, Thr-14, and Ser-15 each contribute to the ATP site. Thr-13 serves as a coordination point for sn-glycerol 3-phosphate. Arg-17 serves as a coordination point for ADP. Sn-glycerol 3-phosphate is bound by residues Arg-83, Glu-84, Tyr-135, and Asp-244. Glycerol contacts are provided by Arg-83, Glu-84, Tyr-135, Asp-244, and Gln-245. Positions 266 and 309 each coordinate ADP. The ATP site is built by Thr-266, Gly-309, Gln-313, and Gly-410. ADP contacts are provided by Gly-410 and Asn-414.

The protein belongs to the FGGY kinase family.

It catalyses the reaction glycerol + ATP = sn-glycerol 3-phosphate + ADP + H(+). The protein operates within polyol metabolism; glycerol degradation via glycerol kinase pathway; sn-glycerol 3-phosphate from glycerol: step 1/1. Its activity is regulated as follows. Inhibited by fructose 1,6-bisphosphate (FBP). In terms of biological role, key enzyme in the regulation of glycerol uptake and metabolism. Catalyzes the phosphorylation of glycerol to yield sn-glycerol 3-phosphate. This chain is Glycerol kinase, found in Shewanella oneidensis (strain ATCC 700550 / JCM 31522 / CIP 106686 / LMG 19005 / NCIMB 14063 / MR-1).